Reading from the N-terminus, the 221-residue chain is MTARVLPSTTAKPLRLWDISPPVAPGSPVFPGDTPYQQQWAASIAPGCPVNVSTLTLSPHIGAHADAPLHYDPQGATIGAVDLTPYIGPCRVIHAIAKGPLIEWEHLAHAVHDLPPRVLVRTYARMPVERWDPTLAAYAPETVERLAALGVKLIGIDTASIDPAGSKTLDSHQVIRQRGLRVLENLVLDEVPEGDYELIALPLKLMTADASPVRAVLRELP.

A substrate-binding site is contributed by Phe30. His60, His64, and Asp66 together coordinate Zn(2+). His70 (proton donor/acceptor) is an active-site residue. Residues His172 and Glu184 each coordinate Zn(2+).

This sequence belongs to the Cyclase 1 superfamily. KynB family. As to quaternary structure, homodimer. It depends on Zn(2+) as a cofactor.

The catalysed reaction is N-formyl-L-kynurenine + H2O = L-kynurenine + formate + H(+). The protein operates within amino-acid degradation; L-tryptophan degradation via kynurenine pathway; L-kynurenine from L-tryptophan: step 2/2. Catalyzes the hydrolysis of N-formyl-L-kynurenine to L-kynurenine, the second step in the kynurenine pathway of tryptophan degradation. The polypeptide is Kynurenine formamidase (Polaromonas sp. (strain JS666 / ATCC BAA-500)).